Reading from the N-terminus, the 886-residue chain is 3',5'-cyclic-AMP phosphodiesterase 4A (886 aa).

Residues 1-128 form a disordered region; it reads MEPPTVPSER…GRSPLDSQAS (128 aa). Serine 13 bears the Phosphoserine mark. The span at 36–46 shows a compositional bias: low complexity; sequence QPRTPIRIQQR. The segment covering 51 to 78 has biased composition (basic and acidic residues); sequence SAERAERERQPHRPIERADAMDTSDRPG. Residues 93-104 are compositionally biased toward gly residues; sequence TGTGSGGAGGGS. Phosphoserine occurs at positions 119 and 123. A Phosphoserine; by MAPKAPK2 modification is found at serine 152. Phosphoserine occurs at positions 157, 165, and 209. Residues 294-331 are disordered; the sequence is KQNEVEIPSPTMKEREKQQAPRPRPSQPPPPPVPHLQP. The segment covering 315-328 has biased composition (pro residues); sequence RPRPSQPPPPPVPH. Serine 346 carries the post-translational modification Phosphoserine. The PDEase domain occupies 357-686; the sequence is VKTDQEELLA…DWYYSAIRQS (330 aa). Residue lysine 358 forms a Glycyl lysine isopeptide (Lys-Gly) (interchain with G-Cter in SUMO) linkage. The active-site Proton donor is the histidine 433. Histidine 433 provides a ligand contact to 3',5'-cyclic AMP. Residues histidine 433 and histidine 437 each coordinate AMP. Zn(2+) is bound by residues histidine 437, histidine 473, aspartate 474, and aspartate 591. Residues aspartate 474, aspartate 591, glutamine 642, and phenylalanine 645 each contribute to the AMP site. Aspartate 474 serves as a coordination point for Mg(2+). Position 474 (aspartate 474) interacts with Mn(2+). 3',5'-cyclic AMP is bound by residues glutamine 642 and phenylalanine 645. Disordered stretches follow at residues 682–705 and 866–886; these read AIRQ…PLPD and FGED…GDPT. Phosphoserine is present on residues serine 686 and serine 688. Over residues 876 to 886 the composition is skewed to gly residues; the sequence is PGGGGSGGDPT.

Belongs to the cyclic nucleotide phosphodiesterase family. PDE4 subfamily. In terms of assembly, interacts with LYN (via SH3 domain). Interacts with ARRB2. Zn(2+) is required as a cofactor. Requires Mg(2+) as cofactor. It depends on Mn(2+) as a cofactor. Post-translationally, proteolytically cleaved by CASP3. Phosphorylated at Ser-119 by PKA. As to expression, expressed in lymphoid cell subsets including CD8-positive T cells and T-helper 2 cells. Expressed in dendritic cells. Highly expressed in liver, stomach, testis, thyroid and adrenal glands and at a lower extent in placenta, kidney, pancreas, ovary, uterus and skin. Expressed in myeloid cell subsets including dendritic cells, monocytes, macrophages, eosinophils and mast cells. Expressed in natural killer cells. Expressed in bronchial smooth muscle. In terms of tissue distribution, expressed at high levels in the heart and small intestine. It is also found in the brain, kidney, spleen, colon, salivary gland, ovary and peripheral blood lymphocytes. As to expression, expressed predominantly in skeletal muscle and brain and at lower levels in the testis. Found in specific neuronal subpopulations including cortical pyramidal neurons, horn neurons in the spinal cord and Purkinje cells in cerebellum (at protein level).

The protein resides in the cytoplasm. The protein localises to the perinuclear region. It is found in the cell projection. Its subcellular location is the ruffle membrane. It localises to the cytosol. The protein resides in the membrane. It carries out the reaction 3',5'-cyclic AMP + H2O = AMP + H(+). It functions in the pathway purine metabolism; 3',5'-cyclic AMP degradation; AMP from 3',5'-cyclic AMP: step 1/1. Inhibited by rolipram, cilomilast, Ro 20-1724, roflumilast and denbufylline. With respect to regulation, inhibited by rolipram. Its activity is regulated as follows. Inhibited by rolipram and cilomilast. Its function is as follows. Hydrolyzes the second messenger 3',5'-cyclic AMP (cAMP), which is a key regulator of many important physiological processes. Functionally, efficiently hydrolyzes cAMP. In terms of biological role, efficiently hydrolyzes cAMP. The phosphodiesterase activity is not affected by calcium, calmodulin or cyclic GMP (cGMP) levels. Does not hydrolyze cGMP. In Homo sapiens (Human), this protein is 3',5'-cyclic-AMP phosphodiesterase 4A (PDE4A).